The primary structure comprises 141 residues: D-aminoacyl-tRNA deacylase (141 aa).

Positions 133-134 (GP) match the Gly-cisPro motif, important for rejection of L-amino acids motif.

Belongs to the DTD family. Homodimer.

Its subcellular location is the cytoplasm. The catalysed reaction is glycyl-tRNA(Ala) + H2O = tRNA(Ala) + glycine + H(+). It carries out the reaction a D-aminoacyl-tRNA + H2O = a tRNA + a D-alpha-amino acid + H(+). Functionally, an aminoacyl-tRNA editing enzyme that deacylates mischarged D-aminoacyl-tRNAs. Also deacylates mischarged glycyl-tRNA(Ala), protecting cells against glycine mischarging by AlaRS. Acts via tRNA-based rather than protein-based catalysis; rejects L-amino acids rather than detecting D-amino acids in the active site. By recycling D-aminoacyl-tRNA to D-amino acids and free tRNA molecules, this enzyme counteracts the toxicity associated with the formation of D-aminoacyl-tRNA entities in vivo and helps enforce protein L-homochirality. This is D-aminoacyl-tRNA deacylase from Thermobifida fusca (strain YX).